A 418-amino-acid polypeptide reads, in one-letter code: F-box/kelch-repeat protein SKIP20 (418 aa).

The region spanning 14–61 is the F-box domain; the sequence is DLIPGLPEELAIECLVRVPFQFHSSIKSVCRSWKCVISSRSFIKERIG. Residues 79-104 are disordered; sequence PSPAMMEGGEMSQKKKEEEEGESQMT. Kelch repeat units lie at residues 104-150, 153-206, 208-255, and 258-314; these read TQQL…AIQD, KVLL…SVGS, KVYV…SMAT, and GFCV…EFPG.

In terms of assembly, part of a SCF (ASK-cullin-F-box) protein ligase complex. Interacts with SKP1A/ASK1 and SPK1B/ASK2.

It is found in the nucleus. The protein operates within protein modification; protein ubiquitination. Functionally, component of SCF(ASK-cullin-F-box) E3 ubiquitin ligase complexes, which may mediate the ubiquitination and subsequent proteasomal degradation of target proteins. This Arabidopsis thaliana (Mouse-ear cress) protein is F-box/kelch-repeat protein SKIP20 (SKIP20).